A 141-amino-acid chain; its full sequence is Oleosin 14.9 kDa (141 aa).

The span at 1–22 (MADQTRTHHEMISRDSTQEAHP) shows a compositional bias: basic and acidic residues. The tract at residues 1–24 (MADQTRTHHEMISRDSTQEAHPKA) is disordered. The segment at 1 to 29 (MADQTRTHHEMISRDSTQEAHPKARQMVK) is polar. Residues 30-141 (AATAVTAGGS…NIGVQHQQVS (112 aa)) form a hydrophobic region. A run of 3 helical transmembrane segments spans residues 38-58 (GSLL…LTVA), 60-80 (PLLV…ALII), and 81-101 (TGFL…SWLY).

The protein belongs to the oleosin family.

The protein resides in the lipid droplet. The protein localises to the membrane. Its function is as follows. May have a structural role to stabilize the lipid body during desiccation of the seed by preventing coalescence of the oil. Probably interacts with both lipid and phospholipid moieties of lipid bodies. May also provide recognition signals for specific lipase anchorage in lipolysis during seedling growth. In Arabidopsis thaliana (Mouse-ear cress), this protein is Oleosin 14.9 kDa (OL3).